The following is a 165-amino-acid chain: V-type proton ATPase 16 kDa proteolipid subunit (165 aa).

Topologically, residues 1-10 (MPSTFSGDET) are lumenal. A helical transmembrane segment spans residues 11 to 33 (APFFGFLGAAAALVFSCMGAAYG). Residues 34 to 55 (TAKSGVGVASMGVMRPELVMKS) are Cytoplasmic-facing. The chain crosses the membrane as a helical span at residues 56 to 76 (IVPVVMAGVLGIYGLIIAVII). Topologically, residues 77 to 95 (STGINPKTKSYYLFDGYAH) are lumenal. Residues 96-117 (LSSGLACGLAGLSAGMAIGIVG) form a helical membrane-spanning segment. Over 118-129 (DAGVRANAQQPK) the chain is Cytoplasmic. Residues 130–155 (LFVGMILILIFAEALALYGLIVGIIL) traverse the membrane as a helical segment. The Lumenal segment spans residues 156–165 (SSRAGQSRAE).

This sequence belongs to the V-ATPase proteolipid subunit family. V-ATPase is a heteromultimeric enzyme composed of a peripheral catalytic V1 complex (main components: subunits A, B, C, D, E, and F) attached to an integral membrane V0 proton pore complex (main component: the proteolipid protein; which is present as a hexamer that forms the proton-conducting pore).

It is found in the vacuole membrane. Functionally, proton-conducting pore forming subunit of the membrane integral V0 complex of vacuolar ATPase. V-ATPase is responsible for acidifying a variety of intracellular compartments in eukaryotic cells. The chain is V-type proton ATPase 16 kDa proteolipid subunit from Nicotiana tabacum (Common tobacco).